The chain runs to 1101 residues: Selenocysteine insertion sequence-binding protein 2-like (1101 aa).

Disordered regions lie at residues 154 to 206 (LGQV…AGPD), 240 to 295 (LWKS…PDSG), 320 to 387 (QKKP…SESL), 884 to 1010 (TSDG…ISVE), and 1030 to 1101 (TLQL…TQTT). A compositionally biased stretch (low complexity) spans 255–265 (AESSSEQGASE). S276 carries the post-translational modification Phosphoserine. The segment covering 327-346 (KNQTFSRGGRQTEQRNNSQV) has biased composition (polar residues). 2 stretches are compositionally biased toward basic and acidic residues: residues 356–371 (SSER…DNKH) and 892–908 (ENEK…EKPS). Positions 925–939 (ATGSTTSATSAGKST) are enriched in low complexity. Basic and acidic residues predominate over residues 940–950 (ASDKEEVKPDD). Polar residues predominate over residues 954–964 (ASQQSTETGSL). Over residues 988 to 1002 (LEEEEDEDEEEEEDY) the composition is skewed to acidic residues. Residues 1030–1039 (TLQLGKTLNG) show a composition bias toward polar residues. The span at 1040-1057 (SEEDNVEQSGEEEAEAPE) shows a compositional bias: acidic residues. Polar residues predominate over residues 1070-1087 (ADQQASPGQQKSSNCSSL).

Binds SECIS (Sec insertion sequence) elements present on selenocysteine (Sec) protein mRNAs, but does not promote Sec incorporation into selenoproteins in vitro. This is Selenocysteine insertion sequence-binding protein 2-like (SECISBP2L) from Homo sapiens (Human).